Reading from the N-terminus, the 35-residue chain is Potassium channel toxin alpha-KTx 6.1 (35 aa).

Disulfide bonds link cysteine 4/cysteine 25, cysteine 10/cysteine 30, cysteine 14/cysteine 32, and cysteine 20/cysteine 35.

The protein belongs to the short scorpion toxin superfamily. Potassium channel inhibitor family. Alpha-KTx 06 subfamily. In terms of tissue distribution, expressed by the venom gland.

It localises to the secreted. Potently and reversibly inhibits the insect voltage-gated Shaker (Sh) potassium channel (isoform alpha (B)), the mammalian voltage-gated potassium channels Kv1.2/KCNA2 (IC(50)=0.44 nM), and the calcium-activated potassium channel KCa2.3/KCNN3 (Kd=330 nM). Its effect on Kv1.3/KCNA3 is controversial, since this channel is voltage-independently inhibited in PubMed:9464266, but is not affected in PubMed:10931199. Furthermore, this toxin competes with apamin (a small conductance calcium-activated potassium channel inhibitor) for binding to rat brain synaptosomes. This chain is Potassium channel toxin alpha-KTx 6.1, found in Pandinus imperator (Emperor scorpion).